Here is a 183-residue protein sequence, read N- to C-terminus: Translocon-associated protein subunit beta (183 aa).

The first 17 residues, 1-17 (MRLLAFAVLALFAVTQA), serve as a signal peptide directing secretion. At 18-146 (EEGARLLASK…REFDRRFSPH (129 aa)) the chain is on the lumenal side. A glycan (N-linked (GlcNAc...) asparagine) is linked at Asn88. Residues 147 to 167 (FLDWAAFGVMTLPSIGVPLLL) traverse the membrane as a helical segment. At 168-183 (WYSSKRKYDTPKTKKN) the chain is on the cytoplasmic side.

It belongs to the TRAP-beta family. As to quaternary structure, heterotetramer of TRAP-alpha, TRAP-beta, TRAP-delta and TRAP-gamma. Interacts with STING1.

The protein resides in the endoplasmic reticulum membrane. In terms of biological role, TRAP proteins are part of a complex whose function is to bind calcium to the ER membrane and thereby regulate the retention of ER resident proteins. This chain is Translocon-associated protein subunit beta (SSR2), found in Bos taurus (Bovine).